The chain runs to 375 residues: Chaperone protein DnaJ (375 aa).

The J domain occupies 6–71 (DYYEVLGVPK…EKRRQYDQFG (66 aa)). The segment at 138-220 (GTTKKIDVTL…CYGTGYISSK (83 aa)) adopts a CR-type zinc-finger fold. Positions 151, 154, 168, 171, 194, 197, 208, and 211 each coordinate Zn(2+). CXXCXGXG motif repeat units lie at residues 151–158 (CSSCHGTG), 168–175 (CSKCGGRG), 194–201 (CPDCHGTG), and 208–215 (CPDCYGTG).

Belongs to the DnaJ family. Homodimer. The cofactor is Zn(2+).

The protein localises to the cytoplasm. Its function is as follows. Participates actively in the response to hyperosmotic and heat shock by preventing the aggregation of stress-denatured proteins and by disaggregating proteins, also in an autonomous, DnaK-independent fashion. Unfolded proteins bind initially to DnaJ; upon interaction with the DnaJ-bound protein, DnaK hydrolyzes its bound ATP, resulting in the formation of a stable complex. GrpE releases ADP from DnaK; ATP binding to DnaK triggers the release of the substrate protein, thus completing the reaction cycle. Several rounds of ATP-dependent interactions between DnaJ, DnaK and GrpE are required for fully efficient folding. Also involved, together with DnaK and GrpE, in the DNA replication of plasmids through activation of initiation proteins. The protein is Chaperone protein DnaJ of Lachnospira eligens (strain ATCC 27750 / DSM 3376 / VPI C15-48 / C15-B4) (Eubacterium eligens).